A 762-amino-acid chain; its full sequence is 1-phosphatidylinositol 4,5-bisphosphate phosphodiesterase delta-4 (762 aa).

The PH domain maps to 16–124; the sequence is LLMQEGMPMR…WMRGLQLLVD (109 aa). Residues 26–53 form a substrate binding region; the sequence is KVRSKSWKKLRYFRLQNDGMTVWHARQA. EF-hand domains follow at residues 134 to 169, 170 to 205, and 206 to 237; these read RLDQWLSDWFQRGDKNQDGKMSFQEVQRLLHLMNVE, MDQEYAFSLFQAADTSQSGTLEGEEFVQFYKALTKR, and AEVQELFESFSADGQKLTLLEFLDFLREEQKE. Ca(2+) contacts are provided by Asp147, Asn149, Asp151, Lys153, Glu158, Asp183, Ser185, Ser187, Thr189, and Glu194. The GBA motif lies at 213 to 243; that stretch reads ESFSADGQKLTLLEFLDFLREEQKERDCTSE. The 146-residue stretch at 290–435 folds into the PI-PLC X-box domain; it reads QDMTQPLNHY…LRRRILVKGK (146 aa). Residue His305 is part of the active site. The Ca(2+) site is built by Asn306, Glu335, and Asp337. The active site involves His350. Glu384 is a binding site for Ca(2+). Residues Lys433 and Lys435 each contribute to the substrate site. Residues 443–471 show a composition bias toward acidic residues; the sequence is LEYEEEEAEPELEESELALESQFETEPEP. The tract at residues 443 to 483 is disordered; it reads LEYEEEEAEPELEESELALESQFETEPEPQEQNLQSKDKKK. A Phosphoserine modification is found at Ser457. Positions 493–609 constitute a PI-PLC Y-box domain; it reads LSSLVIYLKS…GYVLKPDFLR (117 aa). Substrate is bound by residues Ser522 and Arg549. A C2 domain is found at 609-736; the sequence is RDIQSSFHPE…QGYRHIHLLS (128 aa). Positions 650, 652, 676, 705, 706, and 707 each coordinate Ca(2+). Residues 731–734 carry the PDZ-binding motif; the sequence is HIHL.

In terms of assembly, interacts with GRIP1. Interacts (via GBA motif) with guanine nucleotide-binding protein G(i) alpha subunit GNAI3 (inactive GDP-bound form); low-affinity interaction. Ca(2+) serves as cofactor.

It localises to the membrane. It is found in the nucleus. Its subcellular location is the cytoplasm. The protein resides in the endoplasmic reticulum. The enzyme catalyses a 1,2-diacyl-sn-glycero-3-phospho-(1D-myo-inositol-4,5-bisphosphate) + H2O = 1D-myo-inositol 1,4,5-trisphosphate + a 1,2-diacyl-sn-glycerol + H(+). The catalysed reaction is a 1,2-diacyl-sn-glycero-3-phospho-(1D-myo-inositol) + H2O = 1D-myo-inositol 1-phosphate + a 1,2-diacyl-sn-glycerol + H(+). Functionally, hydrolyzes the phosphatidylinositol 4,5-bisphosphate (PIP2) to generate 2 second messenger molecules diacylglycerol (DAG) and inositol 1,4,5-trisphosphate (IP3). DAG mediates the activation of protein kinase C (PKC), while IP3 releases Ca(2+) from intracellular stores. Required for acrosome reaction in sperm during fertilization, probably by acting as an important enzyme for intracellular Ca(2+) mobilization in the zona pellucida-induced acrosome reaction. May play a role in cell growth. Modulates the liver regeneration in cooperation with nuclear PKC. Overexpression up-regulates the Erk signaling pathway and proliferation. The sequence is that of 1-phosphatidylinositol 4,5-bisphosphate phosphodiesterase delta-4 (PLCD4) from Pongo abelii (Sumatran orangutan).